The sequence spans 137 residues: ATP synthase epsilon chain (137 aa).

This sequence belongs to the ATPase epsilon chain family. F-type ATPases have 2 components, CF(1) - the catalytic core - and CF(0) - the membrane proton channel. CF(1) has five subunits: alpha(3), beta(3), gamma(1), delta(1), epsilon(1). CF(0) has three main subunits: a, b and c.

It is found in the cellular thylakoid membrane. Functionally, produces ATP from ADP in the presence of a proton gradient across the membrane. The protein is ATP synthase epsilon chain (atpC) of Synechococcus elongatus (strain ATCC 33912 / PCC 7942 / FACHB-805) (Anacystis nidulans R2).